A 577-amino-acid chain; its full sequence is Arginine--tRNA ligase (577 aa).

The 'HIGH' region signature appears at 124-132 (VAKEMHVGH).

Belongs to the class-I aminoacyl-tRNA synthetase family. In terms of assembly, monomer.

It is found in the cytoplasm. The enzyme catalyses tRNA(Arg) + L-arginine + ATP = L-arginyl-tRNA(Arg) + AMP + diphosphate. In Salmonella typhi, this protein is Arginine--tRNA ligase.